The primary structure comprises 482 residues: MDEGIPHLQERQLLEHRDFIGLDYSSLYMCKPKRSMKRDDTKDTYKLPHRLIEKKRRDRINECIAQLKDLLPEHLKLTTLGHLEKAVVLELTLKHLKALTALTEQQHQKIIALQNGERSLKSPIQSDLDAFHSGFQTCAKEVLQYLSRFESWTPREPRCVQLINHLHAVATQFLPTPQLLTQQVPLSKGTGAPSAAGSAAAPCLERAGQKLEPLAYCVPVIQRTQPSAELAAENDTDTDSGYGGEAEARPDREKGKGAGASRVTIKQEPPGEDSPAPKRMKLDSRGGGSGGGPGGGAAAAAAALLGPDPAAAAALLRPDAALLSSLVAFGGGGGAPFPQPAAAAAPFCLPFCFLSPSAAAAYVQPFLDKSGLEKYLYPAAAAAPFPLLYPGIPAPAAAAAAAAAAAAAAAAFPCLSSVLSPPPEKAGAAAATLLPHEVAPLGAPHPQHPHGRTHLPFAGPREPGNPESSAQEDPSQPGKEAP.

Residue lysine 31 forms a Glycyl lysine isopeptide (Lys-Gly) (interchain with G-Cter in SUMO2) linkage. The 56-residue stretch at 44-99 (TYKLPHRLIEKKRRDRINECIAQLKDLLPEHLKLTTLGHLEKAVVLELTLKHLKAL) folds into the bHLH domain. The tract at residues 67–71 (LKDLL) is necessary for interaction with RXRA and repressor activity towards RXRA. Lysine 121 is covalently cross-linked (Glycyl lysine isopeptide (Lys-Gly) (interchain with G-Cter in SUMO2)). The 36-residue stretch at 131 to 166 (FHSGFQTCAKEVLQYLSRFESWTPREPRCVQLINHL) folds into the Orange domain. A Glycyl lysine isopeptide (Lys-Gly) (interchain with G-Cter in SUMO2) cross-link involves residue lysine 210. 2 disordered regions span residues 228–298 (AELA…GGAA) and 438–482 (VAPL…KEAP). Positions 246-256 (AEARPDREKGK) are enriched in basic and acidic residues. Lysine 266 participates in a covalent cross-link: Glycyl lysine isopeptide (Lys-Gly) (interchain with G-Cter in SUMO2). Over residues 285-297 (RGGGSGGGPGGGA) the composition is skewed to gly residues.

As to quaternary structure, homodimer. Heterodimer with BHLHE40/DEC1. Interacts with CIART and BMAL1. Interacts with RXRA. Interacts with NR0B2 and HNF1A. In terms of tissue distribution, highly expressed in skeletal muscle and brain, moderately expressed in pancreas and heart, weakly expressed in placenta, lung, liver and kidney.

The protein localises to the nucleus. Its function is as follows. Transcriptional repressor involved in the regulation of the circadian rhythm by negatively regulating the activity of the clock genes and clock-controlled genes. Acts as the negative limb of a novel autoregulatory feedback loop (DEC loop) which differs from the one formed by the PER and CRY transcriptional repressors (PER/CRY loop). Both these loops are interlocked as it represses the expression of PER1 and in turn is repressed by PER1/2 and CRY1/2. Represses the activity of the circadian transcriptional activator: CLOCK-BMAL1 heterodimer by competing for the binding to E-box elements (5'-CACGTG-3') found within the promoters of its target genes. Negatively regulates its own expression and the expression of DBP and BHLHE41/DEC2. Acts as a corepressor of RXR and the RXR-LXR heterodimers and represses the ligand-induced RXRA/B/G, NR1H3/LXRA, NR1H4 and VDR transactivation activity. Inhibits HNF1A-mediated transactivation of CYP1A2, CYP2E1 AND CYP3A11. The sequence is that of Class E basic helix-loop-helix protein 41 from Homo sapiens (Human).